The sequence spans 240 residues: uncharacterized protein (240 aa).

Residues 1-17 (MRMAFMLLALLFSFRNA) form the signal peptide.

This is an uncharacterized protein from Treponema pallidum (strain Nichols).